Reading from the N-terminus, the 818-residue chain is Cytosolic phospholipase A2 delta (818 aa).

Residues 5-124 (SPGGPPGHPY…LPGKLLRKTF (120 aa)) enclose the C2 domain. Residues D38, D44, D94, D96, and D102 each contribute to the Ca(2+) site. The PLA2c domain maps to 273 to 818 (GCPEELAVHL…LEARPPRAQT (546 aa)). 330 to 331 (GG) serves as a coordination point for substrate. The active-site Nucleophile is the S361. The active-site Proton acceptor is the D647.

It depends on Ca(2+) as a cofactor. As to expression, expressed in stratified squamous epithelia, such as those in skin and cervix, but not in other tissues. Strongly expressed in the upper spinous layer of the psoriatic epidermis, expressed weakly and discontinuously in atopic dermatitis and mycosis fungoides, and not detected in the epidermis of normal skin.

It localises to the cytoplasm. Its subcellular location is the cytosol. It is found in the membrane. The catalysed reaction is a 1,2-diacyl-sn-glycero-3-phosphocholine + H2O = a 1-acyl-sn-glycero-3-phosphocholine + a fatty acid + H(+). It catalyses the reaction 1-hexadecanoyl-2-(5Z,8Z,11Z,14Z-eicosatetraenoyl)-sn-glycero-3-phosphocholine + H2O = 1-hexadecanoyl-sn-glycero-3-phosphocholine + (5Z,8Z,11Z,14Z)-eicosatetraenoate + H(+). The enzyme catalyses 1-hexadecanoyl-2-(9Z,12Z-octadecadienoyl)-sn-glycero-3-phosphocholine + H2O = (9Z,12Z)-octadecadienoate + 1-hexadecanoyl-sn-glycero-3-phosphocholine + H(+). It carries out the reaction 1-hexadecanoyl-2-(9Z-octadecenoyl)-sn-glycero-3-phosphocholine + H2O = 1-hexadecanoyl-sn-glycero-3-phosphocholine + (9Z)-octadecenoate + H(+). The catalysed reaction is 1-hexadecanoyl-2-(5Z,8Z,11Z,14Z-eicosatetraenoyl)-sn-glycero-3-phosphoethanolamine + H2O = 1-hexadecanoyl-sn-glycero-3-phosphoethanolamine + (5Z,8Z,11Z,14Z)-eicosatetraenoate + H(+). It catalyses the reaction 1-hexadecanoyl-2-(9Z,12Z-octadecadienoyl)-sn-glycero-3-phosphoethanolamine + H2O = 1-hexadecanoyl-sn-glycero-3-phosphoethanolamine + (9Z,12Z)-octadecadienoate + H(+). The protein operates within lipid metabolism; fatty acid metabolism. With respect to regulation, stimulated by cytosolic Ca(2+). Calcium-dependent phospholipase A2 that selectively hydrolyzes glycerophospholipids in the sn-2 position. Has a preference for linoleic acid at the sn-2 position. The chain is Cytosolic phospholipase A2 delta from Homo sapiens (Human).